The following is a 38-amino-acid chain: GTTCYCGSTLGIYWFAVSSCPSGRGYTGHCGYFLGLCC.

Cystine bridges form between cysteine 4-cysteine 37, cysteine 6-cysteine 30, and cysteine 20-cysteine 38.

It belongs to the sea anemone type 3 (BDS) potassium channel toxin family.

Its subcellular location is the secreted. It is found in the nematocyst. Possible modulator of crustacean voltage-gated sodium channels (Nav). This chain is Toxin Bcg III 31.16, found in Bunodosoma cangicum (Sea anemone).